Consider the following 331-residue polypeptide: 3-dehydroquinate synthase homolog (331 aa).

Belongs to the archaeal-type DHQ synthase family.

The chain is 3-dehydroquinate synthase homolog from Aquifex aeolicus (strain VF5).